The sequence spans 445 residues: ATP-dependent protease ATPase subunit HslU (445 aa).

Residues V18, 60-65, D254, E319, and R391 contribute to the ATP site; that span reads GVGKTE.

It belongs to the ClpX chaperone family. HslU subfamily. In terms of assembly, a double ring-shaped homohexamer of HslV is capped on each side by a ring-shaped HslU homohexamer. The assembly of the HslU/HslV complex is dependent on binding of ATP.

The protein resides in the cytoplasm. ATPase subunit of a proteasome-like degradation complex; this subunit has chaperone activity. The binding of ATP and its subsequent hydrolysis by HslU are essential for unfolding of protein substrates subsequently hydrolyzed by HslV. HslU recognizes the N-terminal part of its protein substrates and unfolds these before they are guided to HslV for hydrolysis. In Alcanivorax borkumensis (strain ATCC 700651 / DSM 11573 / NCIMB 13689 / SK2), this protein is ATP-dependent protease ATPase subunit HslU.